The chain runs to 36 residues: U14-myrmicitoxin-Tb1a (36 aa).

Residues 1–23 (MKIIKLITIFTMMATLMXXVANG) form the signal peptide. Residues 24-25 (EP) constitute a propeptide that is removed on maturation. Position 35 is a glutamine amide (Q35).

Expressed by the venom gland.

The protein resides in the secreted. In terms of biological role, venom protein with unknown function. Does not induce paralysis when a high dose is administered by intrathoracic injection into the blowfly Lucilia caesar. The sequence is that of U14-myrmicitoxin-Tb1a from Tetramorium bicarinatum (Tramp ant).